The sequence spans 310 residues: tRNA-cytidine(32) 2-sulfurtransferase (310 aa).

The PP-loop motif signature appears at 45-50 (SGGKDS). 3 residues coordinate [4Fe-4S] cluster: Cys-120, Cys-123, and Cys-211.

The protein belongs to the TtcA family. As to quaternary structure, homodimer. Mg(2+) serves as cofactor. Requires [4Fe-4S] cluster as cofactor.

It localises to the cytoplasm. It catalyses the reaction cytidine(32) in tRNA + S-sulfanyl-L-cysteinyl-[cysteine desulfurase] + AH2 + ATP = 2-thiocytidine(32) in tRNA + L-cysteinyl-[cysteine desulfurase] + A + AMP + diphosphate + H(+). The protein operates within tRNA modification. Functionally, catalyzes the ATP-dependent 2-thiolation of cytidine in position 32 of tRNA, to form 2-thiocytidine (s(2)C32). The sulfur atoms are provided by the cysteine/cysteine desulfurase (IscS) system. This chain is tRNA-cytidine(32) 2-sulfurtransferase, found in Shewanella oneidensis (strain ATCC 700550 / JCM 31522 / CIP 106686 / LMG 19005 / NCIMB 14063 / MR-1).